The chain runs to 386 residues: MEELDALLEELERSTLQDSDEYSNPAPLPLDQHSRKETNLDETSEILSIQDNTSPLPAQLVYTTNIQELNVYSEAQEPKESPPPSKTSAAAQLDELMAHLTEMQAKVAVRADAGKKHLPDKQDHKASLDSMLGGLEQELQDLGIATVPKGHCASCQKPIAGKVIHALGQSWHPEHFVCTHCKEEIGSSPFFERSGLAYCPNDYHQLFSPRCAYCAAPILDKVLTAMNQTWHPEHFFCSHCGEVFGAEGFHEKDKKPYCRKDFLAMFSPKCGGCNRPVLENYLSAMDTVWHPECFVCGDCFTSFSTGSFFELDGRPFCELHYHHRRGTLCHGCGQPITGRCISAMGYKFHPEHFVCAFCLTQLSKGIFREQNDKTYCQPCFNKLFPL.

Residue Met-1 is modified to N-acetylmethionine. Positions 3–15 (ELDALLEELERST) match the LD motif 1 motif. Residues 13–41 (RSTLQDSDEYSNPAPLPLDQHSRKETNLD) are disordered. Ser-19 bears the Phosphoserine mark. Tyr-22 is modified (phosphotyrosine). Position 54 is a phosphoserine (Ser-54). Residue Tyr-62 is modified to Phosphotyrosine. 2 consecutive short sequence motifs (LD motif) follow at residues 70 to 82 (NVYS…KESP) and 92 to 103 (QLDELMAHLTEM). Tyr-72 is subject to Phosphotyrosine; by LYN. Ser-81 carries the phosphoserine modification. LIM zinc-binding domains lie at 150–208 (GHCA…QLFS), 209–267 (PRCA…AMFS), 268–326 (PKCG…HRRG), and 327–386 (TLCH…LFPL).

It belongs to the paxillin family. As to quaternary structure, interacts with PTPN22. Interacts with unphosphorylated ITGA4. Interacts with PTK2B/PYK2, PTPN12, AR and SRF. Interacts (via LD motif 3) with LYN and the interaction is induced upon B-cell antigen receptor (BCR) activation. Interacts (via LD motif 3) with PTK2/FAK. Post-translationally, phosphorylated on tyrosine residues. Phosphorylation on Tyr-72 is important for its inhibitory function. Bombesin stimulates phosphorylation on Tyr-22, Tyr-62 and Tyr-72. Macrophages, monocytes and osteoclasts (at protein level). Strongly expressed in cells and tissues of hematopoietic origin. Highest expression in lymphoid tissues such as spleen, lymph node, thymus and appendix and in the vascular smooth muscle. Lower levels in bone marrow and fetal liver. Also expressed in peripheral blood lymphocytes and a number of hematopoietic cell lines. Very low levels found in epithelial cell lines. Expressed in prostate cancer (PCa) cells and its expression intensity is directly linked to PCa progression.

It is found in the cytoplasm. The protein resides in the cell junction. The protein localises to the focal adhesion. It localises to the nucleus. Its subcellular location is the perinuclear region. It is found in the cell projection. The protein resides in the podosome. The protein localises to the cell membrane. Transcriptional coactivator for androgen receptor (AR) and serum response factor (SRF). Contributes to the regulation of cell adhesion, spreading and cell migration and acts as a negative regulator in integrin-mediated cell adhesion events. Suppresses the integrin-induced tyrosine phosphorylation of paxillin (PXN). May play a critical role as an adapter protein in the formation of the adhesion zone in osteoclasts. Negatively regulates B-cell antigen receptor (BCR) signaling. This chain is Leupaxin (LPXN), found in Homo sapiens (Human).